Consider the following 333-residue polypeptide: Homeobox protein engrailed-2 (333 aa).

Disordered stretches follow at residues 1–49 (MEEN…RALM), 95–206 (GRGG…GANL), and 223–250 (SDRP…PRTA). Composition is skewed to gly residues over residues 25–36 (PGGGSGGGGGSS) and 95–117 (GRGG…GAGG). Low complexity-rich tracts occupy residues 142–151 (PLPAAGSDSP) and 191–200 (LSVSSDSDSS). Positions 244–303 (DKRPRTAFTAEQLQRLKAEFQTNRYLTEQRRQSLAQELSLNESQIKIWFQNKRAKIKKAT) form a DNA-binding region, homeobox.

The protein belongs to the engrailed homeobox family.

The protein localises to the nucleus. In Homo sapiens (Human), this protein is Homeobox protein engrailed-2 (EN2).